Here is a 458-residue protein sequence, read N- to C-terminus: tRNA-2-methylthio-N(6)-dimethylallyladenosine synthase (458 aa).

The region spanning 15-134 is the MTTase N-terminal domain; it reads KKVFIKTYGC…LPDLLEQTKQ (120 aa). Residues Cys24, Cys60, Cys97, Cys175, Cys179, and Cys182 each contribute to the [4Fe-4S] cluster site. The Radical SAM core domain occupies 161-393; sequence RKRGVSAFLT…QVLLLEQQNA (233 aa). One can recognise a TRAM domain in the interval 396 to 457; that stretch reads RSKIGQTTDV…SNSFVGEIAN (62 aa).

Belongs to the methylthiotransferase family. MiaB subfamily. In terms of assembly, monomer. [4Fe-4S] cluster serves as cofactor.

It localises to the cytoplasm. It carries out the reaction N(6)-dimethylallyladenosine(37) in tRNA + (sulfur carrier)-SH + AH2 + 2 S-adenosyl-L-methionine = 2-methylsulfanyl-N(6)-dimethylallyladenosine(37) in tRNA + (sulfur carrier)-H + 5'-deoxyadenosine + L-methionine + A + S-adenosyl-L-homocysteine + 2 H(+). Its function is as follows. Catalyzes the methylthiolation of N6-(dimethylallyl)adenosine (i(6)A), leading to the formation of 2-methylthio-N6-(dimethylallyl)adenosine (ms(2)i(6)A) at position 37 in tRNAs that read codons beginning with uridine. This is tRNA-2-methylthio-N(6)-dimethylallyladenosine synthase from Bartonella quintana (strain Toulouse) (Rochalimaea quintana).